We begin with the raw amino-acid sequence, 252 residues long: Imidazole glycerol phosphate synthase subunit HisF (252 aa).

Active-site residues include aspartate 11 and aspartate 130.

This sequence belongs to the HisA/HisF family. As to quaternary structure, heterodimer of HisH and HisF.

The protein localises to the cytoplasm. The catalysed reaction is 5-[(5-phospho-1-deoxy-D-ribulos-1-ylimino)methylamino]-1-(5-phospho-beta-D-ribosyl)imidazole-4-carboxamide + L-glutamine = D-erythro-1-(imidazol-4-yl)glycerol 3-phosphate + 5-amino-1-(5-phospho-beta-D-ribosyl)imidazole-4-carboxamide + L-glutamate + H(+). It participates in amino-acid biosynthesis; L-histidine biosynthesis; L-histidine from 5-phospho-alpha-D-ribose 1-diphosphate: step 5/9. Its function is as follows. IGPS catalyzes the conversion of PRFAR and glutamine to IGP, AICAR and glutamate. The HisF subunit catalyzes the cyclization activity that produces IGP and AICAR from PRFAR using the ammonia provided by the HisH subunit. In Acinetobacter baumannii (strain AB307-0294), this protein is Imidazole glycerol phosphate synthase subunit HisF.